We begin with the raw amino-acid sequence, 149 residues long: Large ribosomal subunit protein uL11 (149 aa).

The protein belongs to the universal ribosomal protein uL11 family. As to quaternary structure, part of the ribosomal stalk of the 50S ribosomal subunit. Interacts with L10 and the large rRNA to form the base of the stalk. L10 forms an elongated spine to which L12 dimers bind in a sequential fashion forming a multimeric L10(L12)X complex. One or more lysine residues are methylated.

Forms part of the ribosomal stalk which helps the ribosome interact with GTP-bound translation factors. The sequence is that of Large ribosomal subunit protein uL11 from Azorhizobium caulinodans (strain ATCC 43989 / DSM 5975 / JCM 20966 / LMG 6465 / NBRC 14845 / NCIMB 13405 / ORS 571).